We begin with the raw amino-acid sequence, 559 residues long: Spermidine/putrescine import ATP-binding protein PotA (559 aa).

The region spanning 7–448 is the ABC transporter domain; the sequence is IEIEGLNKTF…PKTEWIANFI (442 aa). 40–47 contacts ATP; that stretch reads GPSGCGKT. The tract at residues 108–317 is insert; sequence WTKLDEIPKL…EAFEKRYLSR (210 aa).

Belongs to the ABC transporter superfamily. Spermidine/putrescine importer (TC 3.A.1.11.1) family. As to quaternary structure, the complex is composed of two ATP-binding proteins (PotA), two transmembrane proteins (PotB and PotC) and a solute-binding protein (PotD).

It localises to the cell membrane. It carries out the reaction ATP + H2O + polyamine-[polyamine-binding protein]Side 1 = ADP + phosphate + polyamineSide 2 + [polyamine-binding protein]Side 1.. In terms of biological role, part of the ABC transporter complex PotABCD involved in spermidine/putrescine import. Responsible for energy coupling to the transport system. The polypeptide is Spermidine/putrescine import ATP-binding protein PotA (Mycoplasma genitalium (strain ATCC 33530 / DSM 19775 / NCTC 10195 / G37) (Mycoplasmoides genitalium)).